We begin with the raw amino-acid sequence, 397 residues long: Bifunctional arginine demethylase and lysyl-hydroxylase psr-1 (397 aa).

The 165-residue stretch at 146–310 (RKTKKLSEDY…LVWPKTVRGR (165 aa)) folds into the JmjC domain. Thr189 contacts substrate. Residues His192 and Asp194 each coordinate Fe cation. Asn202 is a 2-oxoglutarate binding site. Lys209 lines the substrate pocket. His278 provides a ligand contact to Fe cation. Thr290 contributes to the 2-oxoglutarate binding site. The segment covering 334–344 (SCTDTPPQSLN) has biased composition (polar residues). Positions 334–383 (SCTDTPPQSLNDSSSDSSSSSSSSDDSSDSETEEDSGRCGLGNRKRRNDV) are disordered. Positions 345-358 (DSSSDSSSSSSSSD) are enriched in low complexity.

The protein belongs to the JMJD6 family. Interacts with ced-5 and ced-12. The cofactor is Fe(2+).

The protein localises to the nucleus. Its function is as follows. Dioxygenase that can both act as a histone arginine demethylase and a lysyl-hydroxylase. The chain is Bifunctional arginine demethylase and lysyl-hydroxylase psr-1 (psr-1) from Caenorhabditis briggsae.